The following is a 365-amino-acid chain: Flagellar P-ring protein (365 aa).

The signal sequence occupies residues 1–19; the sequence is MIKFLSALILLLVTTAAQA.

This sequence belongs to the FlgI family. As to quaternary structure, the basal body constitutes a major portion of the flagellar organelle and consists of four rings (L,P,S, and M) mounted on a central rod.

It is found in the periplasm. The protein localises to the bacterial flagellum basal body. Its function is as follows. Assembles around the rod to form the L-ring and probably protects the motor/basal body from shearing forces during rotation. This is Flagellar P-ring protein from Escherichia coli O9:H4 (strain HS).